The sequence spans 708 residues: Nucleolar protein 11-like (708 aa).

The protein resides in the nucleus. It localises to the nucleolus. Ribosome biogenesis factor. May be required for both optimal rDNA transcription and pre-rRNA processing. In Danio rerio (Zebrafish), this protein is Nucleolar protein 11-like (nol11).